Consider the following 65-residue polypeptide: Hirudin-3 (65 aa).

Residues V1–Y3 form an interaction with thrombin active site region. Disulfide bonds link C6–C14, C16–C28, and C22–C39. A disordered region spans residues C39–Q65. A glycan (O-linked (GalNAc...) threonine) is linked at T45. An interaction with fibrinogen-binding exosite of thrombin region spans residues D55 to Q65. Acidic residues predominate over residues D55 to Q65. Y63 carries the sulfotyrosine modification.

Belongs to the protease inhibitor I14 (hirudin) family.

It is found in the secreted. Hirudin is a potent thrombin-specific protease inhibitor. It forms a stable non-covalent complex with alpha-thrombin, thereby abolishing its ability to cleave fibrinogen. This Hirudo medicinalis (Medicinal leech) protein is Hirudin-3.